The following is a 645-amino-acid chain: Threonine--tRNA ligase (645 aa).

The region spanning 1–61 (MPAITLPDGS…SSDASVKFIT (61 aa)) is the TGS domain. The catalytic stretch occupies residues 243–536 (DHRRIGREMD…LIEQYAGKFP (294 aa)). Cys336, His387, and His513 together coordinate Zn(2+).

It belongs to the class-II aminoacyl-tRNA synthetase family. As to quaternary structure, homodimer. The cofactor is Zn(2+).

It localises to the cytoplasm. The catalysed reaction is tRNA(Thr) + L-threonine + ATP = L-threonyl-tRNA(Thr) + AMP + diphosphate + H(+). In terms of biological role, catalyzes the attachment of threonine to tRNA(Thr) in a two-step reaction: L-threonine is first activated by ATP to form Thr-AMP and then transferred to the acceptor end of tRNA(Thr). Also edits incorrectly charged L-seryl-tRNA(Thr). This chain is Threonine--tRNA ligase, found in Gluconobacter oxydans (strain 621H) (Gluconobacter suboxydans).